Reading from the N-terminus, the 142-residue chain is Nucleoside diphosphate kinase (142 aa).

Residues lysine 11, phenylalanine 59, arginine 87, threonine 93, arginine 104, and asparagine 114 each coordinate ATP. Residue histidine 117 is the Pros-phosphohistidine intermediate of the active site.

This sequence belongs to the NDK family. As to quaternary structure, homotetramer. It depends on Mg(2+) as a cofactor.

It is found in the cytoplasm. It catalyses the reaction a 2'-deoxyribonucleoside 5'-diphosphate + ATP = a 2'-deoxyribonucleoside 5'-triphosphate + ADP. It carries out the reaction a ribonucleoside 5'-diphosphate + ATP = a ribonucleoside 5'-triphosphate + ADP. Major role in the synthesis of nucleoside triphosphates other than ATP. The ATP gamma phosphate is transferred to the NDP beta phosphate via a ping-pong mechanism, using a phosphorylated active-site intermediate. This chain is Nucleoside diphosphate kinase, found in Yersinia pestis bv. Antiqua (strain Antiqua).